Here is a 403-residue protein sequence, read N- to C-terminus: Phosphoglycerate kinase (403 aa).

Residues 24 to 26 (DLN), arginine 39, 62 to 65 (HLGR), arginine 121, and arginine 161 each bind substrate. ATP is bound by residues lysine 211, glycine 299, glutamate 330, and 359–362 (GGDS).

The protein belongs to the phosphoglycerate kinase family. As to quaternary structure, monomer.

Its subcellular location is the cytoplasm. It catalyses the reaction (2R)-3-phosphoglycerate + ATP = (2R)-3-phospho-glyceroyl phosphate + ADP. The protein operates within carbohydrate degradation; glycolysis; pyruvate from D-glyceraldehyde 3-phosphate: step 2/5. This Rhodococcus opacus (strain B4) protein is Phosphoglycerate kinase.